The following is a 779-amino-acid chain: Acyl-CoA dehydrogenase family member 11 (779 aa).

3 positions are modified to N6-acetyllysine: K163, K166, and K175. The residue at position 210 (S210) is a Phosphoserine. Position 323 is a phosphotyrosine (Y323). An N6-succinyllysine mark is found at K368 and K390. Residues 503–513 (FCMTEPNVSSS), 511–513 (SSS), 537–539 (WSS), and S539 contribute to the FAD site. S513 serves as a coordination point for substrate. 628 to 631 (GPGR) contributes to the substrate binding site. FAD contacts are provided by residues R656, Q726, and 726–730 (QVHGG). Substrate is bound at residue G754. FAD-binding positions include 755-757 (PDE) and E757. K765 is modified (N6-acetyllysine).

This sequence belongs to the acyl-CoA dehydrogenase family. Homodimer. Requires FAD as cofactor.

The protein localises to the peroxisome. Its subcellular location is the mitochondrion membrane. It catalyses the reaction a 2,3-saturated acyl-CoA + oxidized [electron-transfer flavoprotein] + H(+) = a (2E)-enoyl-CoA + reduced [electron-transfer flavoprotein]. The catalysed reaction is docosanoyl-CoA + oxidized [electron-transfer flavoprotein] + H(+) = (2E)-docosenoyl-CoA + reduced [electron-transfer flavoprotein]. It carries out the reaction tetracosanoyl-CoA + oxidized [electron-transfer flavoprotein] + H(+) = (2E)-tetracosenoyl-CoA + reduced [electron-transfer flavoprotein]. The enzyme catalyses eicosanoyl-CoA + oxidized [electron-transfer flavoprotein] + H(+) = (2E)-eicosenoyl-CoA + reduced [electron-transfer flavoprotein]. It catalyses the reaction hexacosanoyl-CoA + oxidized [electron-transfer flavoprotein] + H(+) = (2E)-hexacosenoyl-CoA + reduced [electron-transfer flavoprotein]. The catalysed reaction is tricosanoyl-CoA + oxidized [electron-transfer flavoprotein] + H(+) = (2E)-tricosenoyl-CoA + reduced [electron-transfer flavoprotein]. It participates in lipid metabolism; fatty acid beta-oxidation. Its function is as follows. Acyl-CoA dehydrogenase, that exhibits maximal activity towards saturated C22-CoA. Probably participates in beta-oxydation and energy production but could also play a role in the metabolism of specific fatty acids to control fatty acids composition of cellular lipids in brain. In Mus musculus (Mouse), this protein is Acyl-CoA dehydrogenase family member 11 (Acad11).